Here is a 176-residue protein sequence, read N- to C-terminus: N-alpha-acetyltransferase NAT5 (176 aa).

The N-acetyltransferase domain maps to 14 to 176; sequence NNLGMLTKLA…DAILLKKHIS (163 aa).

This sequence belongs to the acetyltransferase family. As to quaternary structure, component of the N-terminal acetyltransferase A (NatA) complex, which is composed of ARD1, NAT1 and NAT5.

It localises to the cytoplasm. It catalyses the reaction N-terminal L-methionyl-L-alanyl-[protein] + acetyl-CoA = N-terminal N(alpha)-acetyl-L-methionyl-L-alanyl-[protein] + CoA + H(+). The enzyme catalyses N-terminal L-methionyl-L-seryl-[protein] + acetyl-CoA = N-terminal N(alpha)-acetyl-L-methionyl-L-seryl-[protein] + CoA + H(+). It carries out the reaction N-terminal L-methionyl-L-valyl-[protein] + acetyl-CoA = N-terminal N(alpha)-acetyl-L-methionyl-L-valyl-[protein] + CoA + H(+). The catalysed reaction is N-terminal L-methionyl-L-threonyl-[protein] + acetyl-CoA = N-terminal N(alpha)-acetyl-L-methionyl-L-threonyl-[protein] + CoA + H(+). It catalyses the reaction N-terminal L-methionyl-L-lysyl-[protein] + acetyl-CoA = N-terminal N(alpha)-acetyl-L-methionyl-L-lysyl-[protein] + CoA + H(+). The enzyme catalyses N-terminal L-methionyl-L-leucyl-[protein] + acetyl-CoA = N-terminal N(alpha)-acetyl-L-methionyl-L-leucyl-[protein] + CoA + H(+). It carries out the reaction N-terminal L-methionyl-L-phenylalanyl-[protein] + acetyl-CoA = N-terminal N(alpha)-acetyl-L-methionyl-L-phenylalanyl-[protein] + CoA + H(+). The catalysed reaction is N-terminal L-methionyl-L-tyrosyl-[protein] + acetyl-CoA = N-terminal N(alpha)-acetyl-L-methionyl-L-tyrosyl-[protein] + CoA + H(+). Functionally, N-alpha-acetyltransferase that acetylates the N-terminus of proteins that retain their initiating methionine. Has a broad substrate specificity: able to acetylate the initiator methionine of most peptides. Non-essential component of the NatA N-terminal acetyltransferase. The polypeptide is N-alpha-acetyltransferase NAT5 (Saccharomyces cerevisiae (strain ATCC 204508 / S288c) (Baker's yeast)).